Here is a 341-residue protein sequence, read N- to C-terminus: MTTYKDAGVNIEEGYKAVNLIKSLARETFDSNVITDIGSFGSMYLLNIGNSEYILVSGTDGVGTKLKIAFYLDKHDTVGIDCVAMCVNDILCHGAKPLFFLDYIACGKLNSSKVANIVKGIAEGCKMAGCSLVGGETAEMPGFYKEDEYDLAGFVVGIVERQKAVCGKDVNTGDVLIGLASSGVHSNGYSLVRKVFGIDDNPKVLEKIYEELGLSLGEELLKPTRIYVKPVLKVLERVNVKGIAHITGGGFFENIPRAFPKGYFAIIEKGSWEVPAIFRLIQEYGKVEEREMFSTFNMGIGMVLIVSEEDVDLTMKILEQEKVNAWVIGTIQKGEDGVVLK.

It belongs to the AIR synthase family.

The protein resides in the cytoplasm. It carries out the reaction 2-formamido-N(1)-(5-O-phospho-beta-D-ribosyl)acetamidine + ATP = 5-amino-1-(5-phospho-beta-D-ribosyl)imidazole + ADP + phosphate + H(+). The protein operates within purine metabolism; IMP biosynthesis via de novo pathway; 5-amino-1-(5-phospho-D-ribosyl)imidazole from N(2)-formyl-N(1)-(5-phospho-D-ribosyl)glycinamide: step 2/2. This chain is Phosphoribosylformylglycinamidine cyclo-ligase, found in Caldicellulosiruptor bescii (strain ATCC BAA-1888 / DSM 6725 / KCTC 15123 / Z-1320) (Anaerocellum thermophilum).